Reading from the N-terminus, the 287-residue chain is Large ribosomal subunit protein uL2 (287 aa).

Basic residues-rich tracts occupy residues 209–220 (GRNRWKARRPKV) and 258–287 (KTRKKKKQSNKLIVRRRRRSSKRSRGGRQS). A disordered region spans residues 209 to 287 (GRNRWKARRP…SKRSRGGRQS (79 aa)).

This sequence belongs to the universal ribosomal protein uL2 family. Part of the 50S ribosomal subunit. Forms a bridge to the 30S subunit in the 70S ribosome.

Functionally, one of the primary rRNA binding proteins. Required for association of the 30S and 50S subunits to form the 70S ribosome, for tRNA binding and peptide bond formation. It has been suggested to have peptidyltransferase activity; this is somewhat controversial. Makes several contacts with the 16S rRNA in the 70S ribosome. This chain is Large ribosomal subunit protein uL2, found in Acaryochloris marina (strain MBIC 11017).